Here is a 313-residue protein sequence, read N- to C-terminus: tRNA dimethylallyltransferase (313 aa).

Gly-13 to Thr-20 contributes to the ATP binding site. Position 15–20 (Thr-15–Thr-20) interacts with substrate. 4 interaction with substrate tRNA regions span residues Asp-38–Leu-41, Gln-162–Arg-166, Arg-243–Arg-248, and Lys-276–Arg-283.

Belongs to the IPP transferase family. As to quaternary structure, monomer. Mg(2+) serves as cofactor.

The enzyme catalyses adenosine(37) in tRNA + dimethylallyl diphosphate = N(6)-dimethylallyladenosine(37) in tRNA + diphosphate. Functionally, catalyzes the transfer of a dimethylallyl group onto the adenine at position 37 in tRNAs that read codons beginning with uridine, leading to the formation of N6-(dimethylallyl)adenosine (i(6)A). This Aliivibrio salmonicida (strain LFI1238) (Vibrio salmonicida (strain LFI1238)) protein is tRNA dimethylallyltransferase.